The sequence spans 525 residues: NGFI-A-binding protein 2 (525 aa).

The interval 1–31 is disordered; sequence MHRAPSPTAEQPPGRGDNTRRTPQPRFKASA. Position 6 is a phosphoserine (Ser6). The tract at residues 35–113 is NCD1; that stretch reads ALPRTLGELQ…REWATNPGLF (79 aa). The disordered stretch occupies residues 135 to 238; the sequence is GTRKGSMSNG…GAGGGPDRLE (104 aa). Phosphoserine is present on residues Ser157, Ser159, Ser162, and Ser171. Gly residues predominate over residues 212–234; it reads AGGGVSEGPGVGGVAAGGAGGGP. Residues 267 to 356 form an NCD2 region; that stretch reads LLKLNKKLAR…SRQVARESTY (90 aa). The segment at 353-384 is necessary for nuclear localization; it reads ESTYLSSLKGSRLHSEELGGPPLKKLKQEVGE. A Glycyl lysine isopeptide (Lys-Gly) (interchain with G-Cter in SUMO1) cross-link involves residue Lys379. Residues 381–416 form a disordered region; the sequence is EVGEQSHNEIQQPPPGPESYAPPYRPSLEEDSASLS. Phosphoserine is present on Ser479. Positions 501 to 525 are disordered; the sequence is APGPHPALVEGRRSSVKVEAEASRQ. Residues 510 to 525 are compositionally biased toward basic and acidic residues; that stretch reads EGRRSSVKVEAEASRQ. Residue Lys517 forms a Glycyl lysine isopeptide (Lys-Gly) (interchain with G-Cter in SUMO1); alternate linkage. Lys517 is covalently cross-linked (Glycyl lysine isopeptide (Lys-Gly) (interchain with G-Cter in SUMO2); alternate).

This sequence belongs to the NAB family. In terms of assembly, homomultimers may associate with EGR1 bound to DNA. Sumoylation by EGR2 represses EGR2 transcriptional activity in hindbrain. In terms of tissue distribution, highly expressed in brain and thymus, and at lower levels in spleen, kidney, heart and testis. Isoform 1 is predominantly expressed in testis, whereas isoform 3 is more abundant in thymus.

It is found in the nucleus. In terms of biological role, acts as a transcriptional repressor for zinc finger transcription factors EGR1 and EGR2. Isoform 2 lacks repression ability. In Mus musculus (Mouse), this protein is NGFI-A-binding protein 2 (Nab2).